A 479-amino-acid polypeptide reads, in one-letter code: Auxin transporter-like protein 1 (479 aa).

Residues 1–58 (MLSEKQGEETMMSSLNETIELNEEREEEKGASPGSGFKNFLWHGGSVYDAWFSCASNQ) are Cytoplasmic-facing. A helical transmembrane segment spans residues 59-76 (VAQVLLTLPYSFSQLGMI). Residues 77–78 (SG) lie on the Extracellular side of the membrane. The chain crosses the membrane as a helical span at residues 79-99 (IIFQVFYGLMGSWTAYLISIL). The Cytoplasmic portion of the chain corresponds to 100-134 (YVEYRSRKEKENVSFKNHVIQWFEVLEGLLGPYWK). The chain crosses the membrane as a helical span at residues 135–155 (AIGLAFNCTFLLFGSVIQLIA). The Extracellular portion of the chain corresponds to 156–171 (CASNIYYINDHLDKRT). Residues 172–192 (WTYIFGACCATTVFIPSFHNY) form a helical membrane-spanning segment. Residues 193-195 (RIW) are Cytoplasmic-facing. A helical membrane pass occupies residues 196-216 (SFLGLGMTTYTAWYMTIAAIV). Over 217-231 (HGQVENVVHSGPKKM) the chain is Extracellular. Residues 232–252 (VWYFTGATNILYTFGGHAVTV) form a helical membrane-spanning segment. Over 253 to 265 (EIMHAMWKPQKFK) the chain is Cytoplasmic. Residues 266 to 286 (AIYFFATLYVFTLTLPSAIAV) form a helical membrane-spanning segment. The Extracellular segment spans residues 287-313 (YWAFGDQLLDHSNAFSLLPRNAWRDAG). Residues 314 to 334 (VILMLIHQFITFGFACTPLYF) traverse the membrane as a helical segment. The Cytoplasmic segment spans residues 335 to 355 (VWEKVIGMHDTKSIFLRALAR). The helical transmembrane segment at 356–376 (LPVVIPIWFLAIIFPFFGPIN) threads the bilayer. Residue Ser377 is a topological domain, extracellular. A helical transmembrane segment spans residues 378–398 (AVGALLVSFTVYVIPASAHML). Over 399-421 (TYRSASARQNAAEKLPKVIPSWT) the chain is Cytoplasmic. The chain crosses the membrane as a helical span at residues 422-442 (LMYVINAFVVIWVTIVGFGFG). The Extracellular segment spans residues 443–479 (GWASMTNFIKQVDTFGLFAKCYQCPPKLPASNHTMHH). Asn474 carries N-linked (GlcNAc...) asparagine glycosylation.

The protein belongs to the amino acid/polyamine transporter 2 family. Amino acid/auxin permease (AAAP) (TC 2.A.18.1) subfamily. As to expression, shoots and roots of nodulating plants. Higher levels in roots, flowers and stems, lower in nodules, leaves, petioles and shoot apices.

The protein localises to the cell membrane. Its function is as follows. Carrier protein involved in proton-driven auxin influx. Mediates the formation of auxin gradient from developing leaves (site of auxin biosynthesis) to tips by contributing to the loading of auxin in vascular tissues and facilitating acropetal (base to tip) auxin transport within inner tissues of the root apex, and basipetal (tip to base) auxin transport within outer tissues of the root apex. May be involved in lateral roots and nodules formation. In Medicago truncatula (Barrel medic), this protein is Auxin transporter-like protein 1 (LAX1).